Here is a 360-residue protein sequence, read N- to C-terminus: UDP-D-xylose:L-fucose alpha-1,3-D-xylosyltransferase MGP4 (360 aa).

The interval Met1 to Leu25 is disordered. Over Met1–Asn41 the chain is Cytoplasmic. The segment covering Asn14–Leu25 has biased composition (low complexity). The chain crosses the membrane as a helical; Signal-anchor for type II membrane protein span at residues Gly42–Ser62. The Lumenal portion of the chain corresponds to Pro63–Glu360. Residues Asn93 and Asn168 are each glycosylated (N-linked (GlcNAc...) asparagine). The short motif at Asp191 to Asp193 is the DXD motif element. Asn285 and Asn310 each carry an N-linked (GlcNAc...) asparagine glycan.

The protein belongs to the glycosyltransferase 77 family. Mn(2+) serves as cofactor. Requires Mg(2+) as cofactor. Widely expressed.

Its subcellular location is the golgi apparatus membrane. In terms of biological role, catalyzes the transfer of D-xylose from UDP-alpha-D-xylose onto L-fucose. Probably involved in the biosynthesis of rhamnogalacturonan II (RG-II) through xylosylation of the internal fucose moiety of the A-chain of RG-II, a structurally complex pectic polysaccharide of the primary cell wall. RG-II is essential for the cell wall integrity of rapidly growing tissues such as roots and pollen tube growth and elongation. This Arabidopsis thaliana (Mouse-ear cress) protein is UDP-D-xylose:L-fucose alpha-1,3-D-xylosyltransferase MGP4.